The sequence spans 463 residues: Siroheme synthase 1 (463 aa).

The tract at residues 1–203 (MDFLPLFCQL…GQQQAAEESV (203 aa)) is precorrin-2 dehydrogenase /sirohydrochlorin ferrochelatase. NAD(+) is bound by residues 22–23 (EV) and 43–44 (PH). Phosphoserine is present on Ser128. Residues 215–463 (GSVTLVGAGP…YGEANTLAGV (249 aa)) form a uroporphyrinogen-III C-methyltransferase region. Pro224 provides a ligand contact to S-adenosyl-L-methionine. Residue Asp247 is the Proton acceptor of the active site. The Proton donor role is filled by Lys269. Residues 300-302 (GGD), Ile305, 330-331 (TA), Met382, and Gly411 each bind S-adenosyl-L-methionine.

In the N-terminal section; belongs to the precorrin-2 dehydrogenase / sirohydrochlorin ferrochelatase family. The protein in the C-terminal section; belongs to the precorrin methyltransferase family.

It catalyses the reaction uroporphyrinogen III + 2 S-adenosyl-L-methionine = precorrin-2 + 2 S-adenosyl-L-homocysteine + H(+). It carries out the reaction precorrin-2 + NAD(+) = sirohydrochlorin + NADH + 2 H(+). The catalysed reaction is siroheme + 2 H(+) = sirohydrochlorin + Fe(2+). It functions in the pathway cofactor biosynthesis; adenosylcobalamin biosynthesis; precorrin-2 from uroporphyrinogen III: step 1/1. The protein operates within cofactor biosynthesis; adenosylcobalamin biosynthesis; sirohydrochlorin from precorrin-2: step 1/1. It participates in porphyrin-containing compound metabolism; siroheme biosynthesis; precorrin-2 from uroporphyrinogen III: step 1/1. Its pathway is porphyrin-containing compound metabolism; siroheme biosynthesis; siroheme from sirohydrochlorin: step 1/1. It functions in the pathway porphyrin-containing compound metabolism; siroheme biosynthesis; sirohydrochlorin from precorrin-2: step 1/1. Functionally, multifunctional enzyme that catalyzes the SAM-dependent methylations of uroporphyrinogen III at position C-2 and C-7 to form precorrin-2 via precorrin-1. Then it catalyzes the NAD-dependent ring dehydrogenation of precorrin-2 to yield sirohydrochlorin. Finally, it catalyzes the ferrochelation of sirohydrochlorin to yield siroheme. The sequence is that of Siroheme synthase 1 from Aeromonas hydrophila subsp. hydrophila (strain ATCC 7966 / DSM 30187 / BCRC 13018 / CCUG 14551 / JCM 1027 / KCTC 2358 / NCIMB 9240 / NCTC 8049).